The chain runs to 398 residues: MASTIDIAAIREAQRRQGPATILAIGTATPSNCVYQADYPDYYFRITKSEHMVDLKEKFKRMCDKSMIRKRYMHLTEEYLKENPSLCEYMAPSLDARQDVVVVEVPKLGKEAATKAIKEWGQPKSKITHLIFCTTSGVDMPGADYQLTKLLGLRPSVKRFMMYQQGCFAGGTVLRLAKDLAENNKGARVLVVCSEITAVTFRGPNDTHLDSLVGQALFGDGAAAVIVGADPDLTTERPLFEMISAAQTILPDSEGAIDGHLREVGLTFHLLKDVPGLISKNIEKALTQAFSPLGITDWNSIFWIAHPGGPAILDQVELKLGLKEEKMRATRHVLSEYGNMSSACVLFIIDEMRKKSAEDGAATTGEGLDWGVLFGFGPGLTVETVVLHSLPTTMAIAT.

C167 is an active-site residue.

This sequence belongs to the thiolase-like superfamily. Chalcone/stilbene synthases family.

It carries out the reaction (E)-4-coumaroyl-CoA + 3 malonyl-CoA + 3 H(+) = 2',4,4',6'-tetrahydroxychalcone + 3 CO2 + 4 CoA. Its pathway is secondary metabolite biosynthesis; flavonoid biosynthesis. Functionally, the primary product of this enzyme is 4,2',4',6'-tetrahydroxychalcone (also termed naringenin-chalcone or chalcone) which can under specific conditions spontaneously isomerize into naringenin. The polypeptide is Chalcone synthase (CHS) (Callistephus chinensis (China aster)).